A 153-amino-acid chain; its full sequence is 3-hydroxyacyl-[acyl-carrier-protein] dehydratase FabZ (153 aa).

Residue histidine 47 is part of the active site.

This sequence belongs to the thioester dehydratase family. FabZ subfamily.

The protein resides in the cytoplasm. The enzyme catalyses a (3R)-hydroxyacyl-[ACP] = a (2E)-enoyl-[ACP] + H2O. In terms of biological role, involved in unsaturated fatty acids biosynthesis. Catalyzes the dehydration of short chain beta-hydroxyacyl-ACPs and long chain saturated and unsaturated beta-hydroxyacyl-ACPs. This Myxococcus xanthus (strain DK1622) protein is 3-hydroxyacyl-[acyl-carrier-protein] dehydratase FabZ.